The following is an 86-amino-acid chain: ATP synthase epsilon chain (86 aa).

The protein belongs to the ATPase epsilon chain family. In terms of assembly, F-type ATPases have 2 components, CF(1) - the catalytic core - and CF(0) - the membrane proton channel. CF(1) has five subunits: alpha(3), beta(3), gamma(1), delta(1), epsilon(1). CF(0) has three main subunits: a, b and c.

Its subcellular location is the cell inner membrane. Functionally, produces ATP from ADP in the presence of a proton gradient across the membrane. This Caulobacter vibrioides (strain ATCC 19089 / CIP 103742 / CB 15) (Caulobacter crescentus) protein is ATP synthase epsilon chain (atpC).